The sequence spans 148 residues: Large ribosomal subunit protein bL9 (148 aa).

It belongs to the bacterial ribosomal protein bL9 family.

Its function is as follows. Binds to the 23S rRNA. The polypeptide is Large ribosomal subunit protein bL9 (Bacillus thuringiensis subsp. konkukian (strain 97-27)).